Reading from the N-terminus, the 331-residue chain is Olfactory receptor 7D11 (331 aa).

Over 1–25 the chain is Extracellular; the sequence is MEIENHTLITKFLILGLSDDPELQP. N-linked (GlcNAc...) asparagine glycosylation occurs at N5. Residues 26-46 form a helical membrane-spanning segment; that stretch reads ILFGLFLSMYLVTLLGNLLII. At 47-57 the chain is on the cytoplasmic side; the sequence is LAVSSDSHLHK. A helical membrane pass occupies residues 58–78; the sequence is PMYFLLSNLSFIDICFISTTI. Residues 79 to 97 are Extracellular-facing; it reads PKMLVNMQSQIKDISYIEC. Residues C97 and C179 are joined by a disulfide bond. The chain crosses the membrane as a helical span at residues 98–118; the sequence is LTQVFFFNIFAGMDNFLLTLM. The Cytoplasmic portion of the chain corresponds to 119-142; the sequence is AYDRFVAICHPLNYTVIMNPRLCA. The chain crosses the membrane as a helical span at residues 143–163; it reads LLILMFWIIMFWVSLIHVLLM. The Extracellular portion of the chain corresponds to 164 to 196; sequence NELNFSRGTEIPHFFCELAQVLKVSNSDNHVNN. N167 carries N-linked (GlcNAc...) asparagine glycosylation. A helical membrane pass occupies residues 197–217; it reads VFMYVVTSLLGVIPMTGILMS. Topologically, residues 218-244 are cytoplasmic; that stretch reads YSQIFSSLFRMSSTVSKYKAFSTCGSH. A helical membrane pass occupies residues 245-265; it reads LCVVTLFYGSGFGVYFSSSVV. Residues 266–271 lie on the Extracellular side of the membrane; that stretch reads HSTQRR. A helical membrane pass occupies residues 272-292; the sequence is KVASLMYTVISPMLNPFIYTL. Topologically, residues 293-331 are cytoplasmic; the sequence is RNKDVKGALGKLFNRVASSPSCINDIRNKLLLRSVRQIL.

Belongs to the G-protein coupled receptor 1 family.

The protein resides in the cell membrane. Its function is as follows. Possible olfactory or taste receptor. The polypeptide is Olfactory receptor 7D11 (Mus musculus (Mouse)).